A 276-amino-acid chain; its full sequence is NAC domain-containing protein 67 (276 aa).

Residues 17–170 (LPPGFRFHPT…DWVLCRLYNK (154 aa)) enclose the NAC domain.

In terms of tissue distribution, expressed in leaf blades.

The protein localises to the nucleus. Functionally, probable transcription factor involved in stress response. The sequence is that of NAC domain-containing protein 67 from Oryza sativa subsp. japonica (Rice).